The sequence spans 427 residues: 3-phosphoshikimate 1-carboxyvinyltransferase (427 aa).

Residues Lys22, Ser23, and Arg27 each coordinate 3-phosphoshikimate. Lys22 serves as a coordination point for phosphoenolpyruvate. Residues Gly96 and Arg124 each contribute to the phosphoenolpyruvate site. 3-phosphoshikimate is bound by residues Ser169, Ser170, Gln171, Ser197, Asp313, Asn336, and Lys340. A phosphoenolpyruvate-binding site is contributed by Gln171. Asp313 acts as the Proton acceptor in catalysis. Residues Arg344, Arg386, and Lys411 each coordinate phosphoenolpyruvate.

It belongs to the EPSP synthase family. Monomer.

Its subcellular location is the cytoplasm. It carries out the reaction 3-phosphoshikimate + phosphoenolpyruvate = 5-O-(1-carboxyvinyl)-3-phosphoshikimate + phosphate. It functions in the pathway metabolic intermediate biosynthesis; chorismate biosynthesis; chorismate from D-erythrose 4-phosphate and phosphoenolpyruvate: step 6/7. Catalyzes the transfer of the enolpyruvyl moiety of phosphoenolpyruvate (PEP) to the 5-hydroxyl of shikimate-3-phosphate (S3P) to produce enolpyruvyl shikimate-3-phosphate and inorganic phosphate. The protein is 3-phosphoshikimate 1-carboxyvinyltransferase of Salmonella typhi.